Reading from the N-terminus, the 67-residue chain is DNA-directed RNA polymerase subunit omega (67 aa).

It belongs to the RNA polymerase subunit omega family. The RNAP catalytic core consists of 2 alpha, 1 beta, 1 beta' and 1 omega subunit. When a sigma factor is associated with the core the holoenzyme is formed, which can initiate transcription.

The enzyme catalyses RNA(n) + a ribonucleoside 5'-triphosphate = RNA(n+1) + diphosphate. Its function is as follows. Promotes RNA polymerase assembly. Latches the N- and C-terminal regions of the beta' subunit thereby facilitating its interaction with the beta and alpha subunits. In Moorella thermoacetica (strain ATCC 39073 / JCM 9320), this protein is DNA-directed RNA polymerase subunit omega.